The following is a 220-amino-acid chain: Deoxyribose-phosphate aldolase (220 aa).

Aspartate 89 functions as the Proton donor/acceptor in the catalytic mechanism. Catalysis depends on lysine 151, which acts as the Schiff-base intermediate with acetaldehyde. Lysine 180 functions as the Proton donor/acceptor in the catalytic mechanism.

Belongs to the DeoC/FbaB aldolase family. DeoC type 1 subfamily.

Its subcellular location is the cytoplasm. It carries out the reaction 2-deoxy-D-ribose 5-phosphate = D-glyceraldehyde 3-phosphate + acetaldehyde. It participates in carbohydrate degradation; 2-deoxy-D-ribose 1-phosphate degradation; D-glyceraldehyde 3-phosphate and acetaldehyde from 2-deoxy-alpha-D-ribose 1-phosphate: step 2/2. Catalyzes a reversible aldol reaction between acetaldehyde and D-glyceraldehyde 3-phosphate to generate 2-deoxy-D-ribose 5-phosphate. The sequence is that of Deoxyribose-phosphate aldolase from Mycoplasmopsis pulmonis (strain UAB CTIP) (Mycoplasma pulmonis).